Reading from the N-terminus, the 322-residue chain is Protein-L-isoaspartate O-methyltransferase (322 aa).

The segment at 1–101 is disordered; the sequence is MSGERAKRFP…AKQGDRSAAP (101 aa). Basic and acidic residues predominate over residues 14 to 29; it reads EDLKREPRKPEGRVAE. Low complexity-rich tracts occupy residues 33 to 51 and 76 to 91; these read AGDAARQRLTAAAAVPAAA and HAPAAPGAAKRAPQGG. Serine 170 is an active-site residue.

It belongs to the methyltransferase superfamily. L-isoaspartyl/D-aspartyl protein methyltransferase family.

It is found in the cytoplasm. It carries out the reaction [protein]-L-isoaspartate + S-adenosyl-L-methionine = [protein]-L-isoaspartate alpha-methyl ester + S-adenosyl-L-homocysteine. Functionally, catalyzes the methyl esterification of L-isoaspartyl residues in peptides and proteins that result from spontaneous decomposition of normal L-aspartyl and L-asparaginyl residues. It plays a role in the repair and/or degradation of damaged proteins. This Burkholderia pseudomallei (strain 1106a) protein is Protein-L-isoaspartate O-methyltransferase.